The chain runs to 377 residues: Pulmonary surfactant-associated protein B (377 aa).

An N-terminal signal peptide occupies residues 1–22 (MAKSHLLQWLLLLPTLCCPGAA). The propeptide occupies 23–191 (ITSASSLECA…PHTQDFSEQQ (169 aa)). Positions 24 to 64 (TSASSLECAQGPQFWCQSLEHAVQCRALGHCLQEVWGHAGA) constitute a Saposin A-type domain. Saposin B-type domains follow at residues 64 to 146 (ANDL…PRGQ), 195 to 272 (PLPF…STED), and 291 to 366 (QDTE…EAPA). 9 disulfides stabilise this stretch: Cys-68–Cys-142, Cys-71–Cys-136, Cys-99–Cys-111, Cys-199–Cys-268, Cys-202–Cys-262, Cys-226–Cys-237, Cys-295–Cys-362, Cys-298–Cys-356, and Cys-321–Cys-331. Positions 271-377 (EDAMGPALPA…PLQCFQTPHL (107 aa)) are excised as a propeptide. A glycan (N-linked (GlcNAc...) asparagine) is linked at Asn-307.

Homodimer; disulfide-linked.

The protein localises to the secreted. The protein resides in the extracellular space. It is found in the surface film. Functionally, pulmonary surfactant-associated proteins promote alveolar stability by lowering the surface tension at the air-liquid interface in the peripheral air spaces. SP-B increases the collapse pressure of palmitic acid to nearly 70 millinewtons per meter. The chain is Pulmonary surfactant-associated protein B (Sftpb) from Mus musculus (Mouse).